Here is a 531-residue protein sequence, read N- to C-terminus: Peptide chain release factor 3 (531 aa).

In terms of domain architecture, tr-type G spans 11–280; sequence GRRRTFAIIS…AFIRFASRPG (270 aa). GTP contacts are provided by residues 20-27, 88-92, and 142-145; these read SHPDAGKT, DTPGH, and NKLD.

Belongs to the TRAFAC class translation factor GTPase superfamily. Classic translation factor GTPase family. PrfC subfamily.

Its subcellular location is the cytoplasm. Functionally, increases the formation of ribosomal termination complexes and stimulates activities of RF-1 and RF-2. It binds guanine nucleotides and has strong preference for UGA stop codons. It may interact directly with the ribosome. The stimulation of RF-1 and RF-2 is significantly reduced by GTP and GDP, but not by GMP. This Gloeobacter violaceus (strain ATCC 29082 / PCC 7421) protein is Peptide chain release factor 3.